Consider the following 642-residue polypeptide: MPVITLPDGSKREFAQPVSTLDVAADIGPGLAKACIAGRVNGELKDACDIIDTDSELSIITAKDEEGVEILRHSCAHLLGHAFKQLWPEAKMAIGPVIDNGFYYDIDLDHKLTQEDIDALQKRMTQLAKTNYAVDKRVVSWQEARDTFEARGESYKIEILDENISKDATPALYHHEEYVDMCRGPHVPNMKFCQNFKLMSVAGAYWRGNSDNKMLQRIYGTAWADKKALKVHLNRLEEAAKRDHRKIGKQLDLYHMQEEAPGMVFWHNDGWSLFLELEKFIRQKLGQYTYQEVKGPLMMDRVLWERSGHWDKYADGMFTTNSESREYAIKPMNCPGHVQIFNQGLKSYRDLPLRMAEFGCCHRNEPSGSLHGLMRVRGFTQDDAHVFCTEEQVQQEVSACIQMVYDTYETFGFKNIVVKLSTRPEKRIGDDDMWDRAEEALKQALKSNDIEFEILPGEGAFYGPKIEFTLHDCLDRAWQCGTVQLDYALPGRLGATYVAEDNSRQTPVMIHRAILGSLERFLGILIEEYAGKFPTWLAPQQVVVMNITDKQSDYAEEVVNLFKEHGIRATKDLRNEKIGFKIREHTLRRVPYLLVVGDQEMENKEVAVRTREGVDLGKMQIQEFATKLKNQISLRSLNLLED.

The TGS domain occupies 1–61 (MPVITLPDGS…DTDSELSIIT (61 aa)). The catalytic stretch occupies residues 243 to 534 (DHRKIGKQLD…LIEEYAGKFP (292 aa)). C334, H385, and H511 together coordinate Zn(2+).

The protein belongs to the class-II aminoacyl-tRNA synthetase family. In terms of assembly, homodimer. Zn(2+) is required as a cofactor.

It is found in the cytoplasm. It catalyses the reaction tRNA(Thr) + L-threonine + ATP = L-threonyl-tRNA(Thr) + AMP + diphosphate + H(+). Functionally, catalyzes the attachment of threonine to tRNA(Thr) in a two-step reaction: L-threonine is first activated by ATP to form Thr-AMP and then transferred to the acceptor end of tRNA(Thr). Also edits incorrectly charged L-seryl-tRNA(Thr). This Shewanella piezotolerans (strain WP3 / JCM 13877) protein is Threonine--tRNA ligase.